We begin with the raw amino-acid sequence, 240 residues long: Ribose-5-phosphate isomerase A (240 aa).

Residues 41–44 (TGST), 94–97 (DGAD), and 107–110 (KGGG) each bind substrate. Glutamate 116 acts as the Proton acceptor in catalysis. Lysine 134 lines the substrate pocket.

It belongs to the ribose 5-phosphate isomerase family. As to quaternary structure, homodimer.

It catalyses the reaction aldehydo-D-ribose 5-phosphate = D-ribulose 5-phosphate. The protein operates within carbohydrate degradation; pentose phosphate pathway; D-ribose 5-phosphate from D-ribulose 5-phosphate (non-oxidative stage): step 1/1. Its function is as follows. Catalyzes the reversible conversion of ribose-5-phosphate to ribulose 5-phosphate. The protein is Ribose-5-phosphate isomerase A of Polaromonas sp. (strain JS666 / ATCC BAA-500).